We begin with the raw amino-acid sequence, 98 residues long: Small ribosomal subunit protein uS19 (98 aa).

The tract at residues T77 to K98 is disordered.

The protein belongs to the universal ribosomal protein uS19 family.

Functionally, protein S19 forms a complex with S13 that binds strongly to the 16S ribosomal RNA. The polypeptide is Small ribosomal subunit protein uS19 (Chlorobium luteolum (strain DSM 273 / BCRC 81028 / 2530) (Pelodictyon luteolum)).